The following is a 166-amino-acid chain: UPF0336 protein ML1908 (166 aa).

Belongs to the UPF0336 family.

This chain is UPF0336 protein ML1908, found in Mycobacterium leprae (strain TN).